Reading from the N-terminus, the 304-residue chain is Acetylglutamate kinase (304 aa).

Substrate is bound by residues 77–78 (GG), Arg-99, and Asn-193.

The protein belongs to the acetylglutamate kinase family. ArgB subfamily.

The protein localises to the cytoplasm. It carries out the reaction N-acetyl-L-glutamate + ATP = N-acetyl-L-glutamyl 5-phosphate + ADP. Its pathway is amino-acid biosynthesis; L-arginine biosynthesis; N(2)-acetyl-L-ornithine from L-glutamate: step 2/4. Functionally, catalyzes the ATP-dependent phosphorylation of N-acetyl-L-glutamate. The sequence is that of Acetylglutamate kinase from Chlorobium limicola (strain DSM 245 / NBRC 103803 / 6330).